The following is a 331-amino-acid chain: L-lactate dehydrogenase A chain (331 aa).

NAD(+) is bound by residues 29 to 57 (GMVG…MEDK) and R98. Positions 105, 137, and 168 each coordinate substrate. Residue N137 coordinates NAD(+). Catalysis depends on H192, which acts as the Proton acceptor. T247 contributes to the substrate binding site.

The protein belongs to the LDH/MDH superfamily. LDH family. In terms of assembly, homotetramer.

It is found in the cytoplasm. The catalysed reaction is (S)-lactate + NAD(+) = pyruvate + NADH + H(+). It functions in the pathway fermentation; pyruvate fermentation to lactate; (S)-lactate from pyruvate: step 1/1. Interconverts simultaneously and stereospecifically pyruvate and lactate with concomitant interconversion of NADH and NAD(+). This chain is L-lactate dehydrogenase A chain (ldha), found in Chaenocephalus aceratus (Blackfin icefish).